Reading from the N-terminus, the 185-residue chain is Ribosome-recycling factor (185 aa).

Positions 140–168 are disordered; the sequence is KKEQKDGNITEDEQRNLEKQVQKITDDST.

The protein belongs to the RRF family.

The protein localises to the cytoplasm. In terms of biological role, responsible for the release of ribosomes from messenger RNA at the termination of protein biosynthesis. May increase the efficiency of translation by recycling ribosomes from one round of translation to another. In Lactobacillus helveticus (strain DPC 4571), this protein is Ribosome-recycling factor.